Reading from the N-terminus, the 272-residue chain is Elongation factor Ts (272 aa).

Residues 76–79 (TDFV) are involved in Mg(2+) ion dislocation from EF-Tu.

It belongs to the EF-Ts family.

The protein resides in the cytoplasm. Associates with the EF-Tu.GDP complex and induces the exchange of GDP to GTP. It remains bound to the aminoacyl-tRNA.EF-Tu.GTP complex up to the GTP hydrolysis stage on the ribosome. This Corynebacterium jeikeium (strain K411) protein is Elongation factor Ts.